The chain runs to 288 residues: ATP synthase gamma chain (288 aa).

This sequence belongs to the ATPase gamma chain family. As to quaternary structure, F-type ATPases have 2 components, CF(1) - the catalytic core - and CF(0) - the membrane proton channel. CF(1) has five subunits: alpha(3), beta(3), gamma(1), delta(1), epsilon(1). CF(0) has three main subunits: a, b and c.

The protein localises to the cell inner membrane. Produces ATP from ADP in the presence of a proton gradient across the membrane. The gamma chain is believed to be important in regulating ATPase activity and the flow of protons through the CF(0) complex. The sequence is that of ATP synthase gamma chain from Vesicomyosocius okutanii subsp. Calyptogena okutanii (strain HA).